Consider the following 561-residue polypeptide: Cytochrome P450 monooxygenase avaL (561 aa).

The helical transmembrane segment at 19–39 (IAASCALVCIVSACYVVWSLL) threads the bilayer. Cysteine 508 contributes to the heme binding site.

The protein belongs to the cytochrome P450 family. Requires heme as cofactor.

Its subcellular location is the membrane. It participates in secondary metabolite biosynthesis. In terms of biological role, cytochrome P450 monooxygenase; part of the cluster that mediates the biosynthesis of a highly modified cyclo-arginine-tryptophan dipeptide (cRW). The first step of the pathway is perfornmed by the arginine-containing cyclodipeptide synthase (RCPDS) avaA that acts as the scaffold-generating enzyme and is responsible for formation of the cyclo-Arg-Trp (cRW) diketopiperazine. AvaB then acts as a multifunctional flavoenzyme that is responsible for generating the cyclo-Arg-formylkynurenine DKP, which can be deformylated by avaC. AvaB then further catalyzes an additional N-oxidation followed by cyclization and dehydration. The next step is an N-acetylation of the guanidine group catalyzed by the arginine N-acetyltransferase avaD. The roles of the additional enzymes identified within the ava cluster still have to be determined. The polypeptide is Cytochrome P450 monooxygenase avaL (Aspergillus versicolor).